Reading from the N-terminus, the 256-residue chain is Probable hydroxyacylglutathione hydrolase SPCC13B11.03c (256 aa).

Zn(2+) contacts are provided by H63, H65, D67, H68, H118, and D139. Residues 148 to 150 (RFF), 178 to 180 (HEY), and 250 to 253 (RTLK) contribute to the substrate site. H178 serves as a coordination point for Zn(2+).

This sequence belongs to the metallo-beta-lactamase superfamily. Glyoxalase II family. Zn(2+) is required as a cofactor.

It localises to the cytoplasm. Its subcellular location is the nucleus. The enzyme catalyses an S-(2-hydroxyacyl)glutathione + H2O = a 2-hydroxy carboxylate + glutathione + H(+). It catalyses the reaction (R)-S-lactoylglutathione + H2O = (R)-lactate + glutathione + H(+). The protein operates within secondary metabolite metabolism; methylglyoxal degradation; (R)-lactate from methylglyoxal: step 2/2. In terms of biological role, thiolesterase that catalyzes the hydrolysis of S-D-lactoylglutathione to form glutathione and D-lactic acid. Involved in the metabolism of methylglyoxal, a toxic compound for yeast proliferation, by converting methylglyoxal to lactate via S-D-lactoylglutathione by sequential enzyme reactions catalyzed by glyoxalase I and glyoxalase II. The chain is Probable hydroxyacylglutathione hydrolase SPCC13B11.03c from Schizosaccharomyces pombe (strain 972 / ATCC 24843) (Fission yeast).